Reading from the N-terminus, the 417-residue chain is Tyrosine aminotransferase (417 aa).

Lys-249 bears the N6-(pyridoxal phosphate)lysine mark.

The protein belongs to the class-I pyridoxal-phosphate-dependent aminotransferase family. In terms of assembly, homodimer. The cofactor is pyridoxal 5'-phosphate.

The enzyme catalyses L-tyrosine + 2-oxoglutarate = 3-(4-hydroxyphenyl)pyruvate + L-glutamate. The protein operates within amino-acid degradation; L-phenylalanine degradation; acetoacetate and fumarate from L-phenylalanine: step 2/6. In terms of biological role, transaminase involved in tyrosine breakdown. Converts tyrosine to p-hydroxyphenylpyruvate. Has much lower affinity and transaminase activity towards phenylalanine. This is Tyrosine aminotransferase (tat) from Dictyostelium discoideum (Social amoeba).